Reading from the N-terminus, the 356-residue chain is S-adenosylmethionine:tRNA ribosyltransferase-isomerase (356 aa).

Belongs to the QueA family. As to quaternary structure, monomer.

The protein resides in the cytoplasm. The enzyme catalyses 7-aminomethyl-7-carbaguanosine(34) in tRNA + S-adenosyl-L-methionine = epoxyqueuosine(34) in tRNA + adenine + L-methionine + 2 H(+). It functions in the pathway tRNA modification; tRNA-queuosine biosynthesis. Functionally, transfers and isomerizes the ribose moiety from AdoMet to the 7-aminomethyl group of 7-deazaguanine (preQ1-tRNA) to give epoxyqueuosine (oQ-tRNA). The sequence is that of S-adenosylmethionine:tRNA ribosyltransferase-isomerase from Cronobacter sakazakii (strain ATCC BAA-894) (Enterobacter sakazakii).